The chain runs to 577 residues: Proline--tRNA ligase (577 aa).

The protein belongs to the class-II aminoacyl-tRNA synthetase family. ProS type 1 subfamily. In terms of assembly, homodimer.

Its subcellular location is the cytoplasm. The enzyme catalyses tRNA(Pro) + L-proline + ATP = L-prolyl-tRNA(Pro) + AMP + diphosphate. Catalyzes the attachment of proline to tRNA(Pro) in a two-step reaction: proline is first activated by ATP to form Pro-AMP and then transferred to the acceptor end of tRNA(Pro). As ProRS can inadvertently accommodate and process non-cognate amino acids such as alanine and cysteine, to avoid such errors it has two additional distinct editing activities against alanine. One activity is designated as 'pretransfer' editing and involves the tRNA(Pro)-independent hydrolysis of activated Ala-AMP. The other activity is designated 'posttransfer' editing and involves deacylation of mischarged Ala-tRNA(Pro). The misacylated Cys-tRNA(Pro) is not edited by ProRS. The protein is Proline--tRNA ligase of Thermotoga sp. (strain RQ2).